Here is a 360-residue protein sequence, read N- to C-terminus: MDPEETSVYLDYYYATSPNPDIRETHSHVPYTSVFLPVFYTAVFLTGVLGNLVLMGALHFKPGSRRLIDIFIINLAASDFIFLVTLPLWVDKEASLGLWRTGSFLCKGSSYMISVNMHCSVFLLTCMSVDRYLAIVCPVVSRKFRRTDCAYVVCASIWFISCLLGLPTLLSRELTLIDDKPYCAEKKATPLKLIWSLVALIFTFFVPLLSIVTCYCCIARKLCAHYQQSGKHNKKLKKSIKIIFIVVAAFLVSWLPFNTSKLLAIVSGLQQERYFPSAILQLGMEVSGPLAFANSCVNPFIYYIFDSYIRRAIVHCLCPCLKNYDFGSSTETSDSHLTKALSTFIHAEDFTRRRKRSVSL.

Over 1 to 33 (MDPEETSVYLDYYYATSPNPDIRETHSHVPYTS) the chain is Extracellular. A helical membrane pass occupies residues 34–54 (VFLPVFYTAVFLTGVLGNLVL). The Cytoplasmic portion of the chain corresponds to 55 to 69 (MGALHFKPGSRRLID). A helical membrane pass occupies residues 70 to 90 (IFIINLAASDFIFLVTLPLWV). Residues 91 to 120 (DKEASLGLWRTGSFLCKGSSYMISVNMHCS) lie on the Extracellular side of the membrane. A helical membrane pass occupies residues 121 to 141 (VFLLTCMSVDRYLAIVCPVVS). Over 142–149 (RKFRRTDC) the chain is Cytoplasmic. Residues 150-170 (AYVVCASIWFISCLLGLPTLL) traverse the membrane as a helical segment. The Extracellular segment spans residues 171–192 (SRELTLIDDKPYCAEKKATPLK). A helical membrane pass occupies residues 193–213 (LIWSLVALIFTFFVPLLSIVT). At 214–239 (CYCCIARKLCAHYQQSGKHNKKLKKS) the chain is on the cytoplasmic side. Residues 240 to 260 (IKIIFIVVAAFLVSWLPFNTS) traverse the membrane as a helical segment. The Extracellular portion of the chain corresponds to 261–284 (KLLAIVSGLQQERYFPSAILQLGM). Residues 285-305 (EVSGPLAFANSCVNPFIYYIF) traverse the membrane as a helical segment. The Cytoplasmic segment spans residues 306–360 (DSYIRRAIVHCLCPCLKNYDFGSSTETSDSHLTKALSTFIHAEDFTRRRKRSVSL). A Phosphoserine modification is found at Ser-359.

Belongs to the G-protein coupled receptor 1 family. As to quaternary structure, interacts with adapter YWHAE; this interaction promotes ER-to-Golgi transport of GPR15. In terms of processing, phosphorylation is necessary for YWHAE binding and efficient surface expression. Post-translationally, O-glycosylated. Sialylated O-glycans in the N-terminal tail inhibits binding of GPR15LG. Sulfation is required for efficient binding of GPR15LG.

The protein resides in the cell membrane. Its function is as follows. G protein-coupled receptor that plays an important role in immune homeostasis. Acts via its natural ligand GPR15LG, a chemokine-like polypeptide strongly expressed in gastrointestinal tissues. GPR15-GPR15LG signaling axis regulates intestinal homeostasis and inflammation through the migration of immune cells. Controls thereby the specific homing of T-cells, particularly FOXP3+ regulatory T-cells (Tregs), to the large intestine lamina propria. Also required for skin localization of thymus-derived dendritic epidermal T-cells. Plays an important role in mediating cytoprotective function as well as angiogenesis of thrombomodulin. Mechanistically, preferentially signals through the Gi/o pathway to inhibit adenylate cyclase activity and activate a phosphatidylinositol-calcium second messenger system that regulates the release of Ca(2+) ions from intracellular stores. The protein is G-protein coupled receptor 15 (GPR15) of Macaca nemestrina (Pig-tailed macaque).